Here is a 404-residue protein sequence, read N- to C-terminus: Putative nitronate monooxygenase (404 aa).

41–43 (PMA) lines the FMN pocket. The active-site Proton acceptor is the His224. His224 provides a ligand contact to substrate. Residues 270-272 (AGG) and 293-294 (GT) contribute to the FMN site.

The protein belongs to the nitronate monooxygenase family. NMO class I subfamily. It depends on FMN as a cofactor.

Its subcellular location is the cytoplasm. The catalysed reaction is ethylnitronate + O2 = chemical entity + acetaldehyde + nitrite + H(+). Its function is as follows. Catalyzes the oxidation of alkyl nitronates to produce the corresponding carbonyl compounds and nitrites. The sequence is that of Putative nitronate monooxygenase from Saccharomyces cerevisiae (strain ATCC 204508 / S288c) (Baker's yeast).